A 237-amino-acid chain; its full sequence is 2,3-bisphosphoglycerate-dependent phosphoglycerate mutase (237 aa).

Substrate-binding positions include 8–15 (RHGQSQWN), 21–22 (TG), Arg60, 87–90 (ERHY), Lys98, 114–115 (RR), and 180–181 (GN). His9 acts as the Tele-phosphohistidine intermediate in catalysis. Glu87 acts as the Proton donor/acceptor in catalysis.

Belongs to the phosphoglycerate mutase family. BPG-dependent PGAM subfamily. In terms of assembly, homodimer.

The catalysed reaction is (2R)-2-phosphoglycerate = (2R)-3-phosphoglycerate. The protein operates within carbohydrate degradation; glycolysis; pyruvate from D-glyceraldehyde 3-phosphate: step 3/5. Its function is as follows. Catalyzes the interconversion of 2-phosphoglycerate and 3-phosphoglycerate. This Caulobacter sp. (strain K31) protein is 2,3-bisphosphoglycerate-dependent phosphoglycerate mutase.